Reading from the N-terminus, the 202-residue chain is Adenosylcobalamin/alpha-ribazole phosphatase (202 aa).

Catalysis depends on His8, which acts as the Tele-phosphohistidine intermediate. Catalysis depends on Glu81, which acts as the Proton donor/acceptor.

This sequence belongs to the phosphoglycerate mutase family.

The enzyme catalyses adenosylcob(III)alamin 5'-phosphate + H2O = adenosylcob(III)alamin + phosphate. It catalyses the reaction alpha-ribazole 5'-phosphate + H2O = alpha-ribazole + phosphate. The protein operates within nucleoside biosynthesis; alpha-ribazole biosynthesis; alpha-ribazole from 5,6-dimethylbenzimidazole: step 2/2. Catalyzes the conversion of adenosylcobalamin 5'-phosphate to adenosylcobalamin (vitamin B12); involved in the assembly of the nucleotide loop of cobalamin. Also catalyzes the hydrolysis of the phospho group from alpha-ribazole 5'-phosphate to form alpha-ribazole. The protein is Adenosylcobalamin/alpha-ribazole phosphatase (cobC) of Salmonella typhi.